A 118-amino-acid polypeptide reads, in one-letter code: Small ribosomal subunit protein uS13 (118 aa).

A disordered region spans residues 95-118 (LPLRGQRTRTNARTRKGPRKAIKK).

It belongs to the universal ribosomal protein uS13 family. As to quaternary structure, part of the 30S ribosomal subunit. Forms a loose heterodimer with protein S19. Forms two bridges to the 50S subunit in the 70S ribosome.

Functionally, located at the top of the head of the 30S subunit, it contacts several helices of the 16S rRNA. In the 70S ribosome it contacts the 23S rRNA (bridge B1a) and protein L5 of the 50S subunit (bridge B1b), connecting the 2 subunits; these bridges are implicated in subunit movement. Contacts the tRNAs in the A and P-sites. This is Small ribosomal subunit protein uS13 from Xylella fastidiosa (strain 9a5c).